The following is a 543-amino-acid chain: Zinc finger protein 280B (543 aa).

M1 is subject to N-acetylmethionine. The segment covering 1 to 10 (MEQSCEEEKE) has biased composition (acidic residues). Residues 1-23 (MEQSCEEEKEPEPQKNIQETKQV) are disordered. Phosphoserine is present on residues S68 and S70. The segment at 105–138 (SQLESRSTDSPIIIEPLSKPDYRNSSPQVVPNNS) is disordered. Residues 128 to 138 (NSSPQVVPNNS) are compositionally biased toward low complexity. Residues K173, K247, and K261 each participate in a glycyl lysine isopeptide (Lys-Gly) (interchain with G-Cter in SUMO2) cross-link. 4 consecutive C2H2-type zinc fingers follow at residues 343–366 (TTCQ…ENVH), 373–396 (TVCK…KDHH), 432–454 (LLCP…YRGH), and 460–483 (HQCS…TQCH). Residues 518–543 (ASITVSTSDSEPSLPRSKSKISKKSH) form a disordered region. A compositionally biased stretch (basic residues) spans 534-543 (SKSKISKKSH).

It localises to the nucleus. Functionally, may function as a transcription factor. This Homo sapiens (Human) protein is Zinc finger protein 280B (ZNF280B).